Consider the following 247-residue polypeptide: L-cystine import ATP-binding protein TcyC (247 aa).

The ABC transporter domain occupies 2-240 (LTVKGLNKSF…PKEERTQRFL (239 aa)). Residue 34 to 41 (GPSGSGKT) coordinates ATP.

It belongs to the ABC transporter superfamily. L-cystine importer (TC 3.A.1.3.14) family. As to quaternary structure, the complex is composed of two ATP-binding proteins (TcyC), two transmembrane proteins (TcyB) and a solute-binding protein (TcyA).

The protein localises to the cell membrane. In terms of biological role, part of the ABC transporter complex TcyABC involved in L-cystine import. Responsible for energy coupling to the transport system. The protein is L-cystine import ATP-binding protein TcyC (tcyC) of Bacillus subtilis (strain 168).